Consider the following 476-residue polypeptide: Glycogen synthase (476 aa).

Lysine 15 is an ADP-alpha-D-glucose binding site.

The protein belongs to the glycosyltransferase 1 family. Bacterial/plant glycogen synthase subfamily.

The catalysed reaction is [(1-&gt;4)-alpha-D-glucosyl](n) + ADP-alpha-D-glucose = [(1-&gt;4)-alpha-D-glucosyl](n+1) + ADP + H(+). Its pathway is glycan biosynthesis; glycogen biosynthesis. Its function is as follows. Synthesizes alpha-1,4-glucan chains using ADP-glucose. This chain is Glycogen synthase, found in Streptococcus equi subsp. zooepidemicus (strain H70).